Consider the following 188-residue polypeptide: CMT1A duplicated region transcript 15 protein (188 aa).

Expressed in fetal heart, kidney, liver, lung and spleen.

The sequence is that of CMT1A duplicated region transcript 15 protein (CDRT15) from Homo sapiens (Human).